Reading from the N-terminus, the 470-residue chain is Poly(A) polymerase catalytic subunit (470 aa).

Catalysis depends on residues Asp192 and Asp194.

This sequence belongs to the poxviridae poly(A) polymerase catalytic subunit family. As to quaternary structure, heterodimer of a large (catalytic) subunit and a small (regulatory) subunit.

The catalysed reaction is RNA(n) + ATP = RNA(n)-3'-adenine ribonucleotide + diphosphate. In terms of biological role, polymerase that creates the 3'-poly(A) tail of mRNA's. The polypeptide is Poly(A) polymerase catalytic subunit (PAPL) (Erythrocebus patas (Red guenon)).